The following is a 701-amino-acid chain: Phytyl ester synthase 2, chloroplastic (701 aa).

The N-terminal 65 residues, 1 to 65 (MAVTVLPSVS…KNNDENRATV (65 aa)), are a transit peptide targeting the chloroplast. A disordered region spans residues 37-64 (SVTSTSSPPTPSSGVQRRRKNNDENRAT).

The protein belongs to the diacylglycerol acyltransferase family.

The protein resides in the plastid. The protein localises to the chloroplast. It is found in the plastoglobule. The catalysed reaction is a 1,2-diacyl-3-O-(beta-D-galactosyl)-sn-glycerol + a 1,2-diacylglycerol = an acyl-3-O-(beta-D-galactosyl)-sn-glycerol + a triacylglycerol. It carries out the reaction a 1,2-diacylglycerol + a fatty acyl-CoA = a triacylglycerol + CoA. It catalyses the reaction a fatty acyl-[ACP] + a 1,2-diacylglycerol = a triacylglycerol + holo-[ACP]. The enzyme catalyses phytol + a fatty acyl-CoA = a fatty acid phytyl ester + CoA. The catalysed reaction is phytol + tetradecanoyl-CoA = tetradecanoate phytyl ester + CoA. It carries out the reaction a 1,3-diacylglycerol + a fatty acyl-CoA = a triacylglycerol + CoA. It catalyses the reaction 1,2-dihexanoylglycerol + tetradecanoyl-CoA = 1,2-dihexanoyl-3-tetradecanoylglycerol + CoA. The enzyme catalyses 1,2-dihexanoylglycerol + hexadecanoyl-CoA = 1,2-dihexanoyl-3-hexadecanoylglycerol + CoA. The catalysed reaction is 1,2-dihexanoylglycerol + octadecanoyl-CoA = 1,2-dihexanoyl-3-octadecanoylglycerol + CoA. It carries out the reaction (7Z,10Z,13Z)-hexadecatrienoyl-CoA + 1,2-dihexanoylglycerol = 1,2-dihexanoyl-3-(7Z,10Z,13Z-hexadecatrienoyl)-glycerol + CoA. It catalyses the reaction 1,2-dihexanoylglycerol + (9Z)-octadecenoyl-CoA = 1,2-dihexanoyl-3-(9Z-octadecenoyl)-glycerol + CoA. The enzyme catalyses 1,2-dihexanoylglycerol + (9Z,12Z,15Z)-octadecatrienoyl-CoA = 1,2-dihexanoyl-3-(9Z,12Z,15Z-octadecatrienoyl)-glycerol + CoA. The catalysed reaction is phytol + decanoyl-CoA = decanoate phytyl ester + CoA. It carries out the reaction (7Z,10Z,13Z)-hexadecatrienoyl-CoA + phytol = (7Z,10Z,13Z)-hexadecatrienoate phytyl ester + CoA. It catalyses the reaction phytol + dodecanoyl-CoA = dodecanoate phytyl ester + CoA. Its function is as follows. Acyltransferase involved in fatty acid phytyl ester synthesis in chloroplasts, a process required for the maintenance of the photosynthetic membrane integrity during abiotic stress and senescence. Exhibits phytyl ester synthesis and diacylglycerol acyltransferase activities with broad substrate specificities, and can employ acyl-CoAs, acyl carrier proteins, and galactolipids as acyl donors. This chain is Phytyl ester synthase 2, chloroplastic, found in Arabidopsis thaliana (Mouse-ear cress).